Reading from the N-terminus, the 430-residue chain is MGKNVVVLGTQWGDEGKGKIVDLLTEHATAVVRYQGGHNAGHTLVIDGEKTVLHLIPSGVLREGVQCLIGNGVVVAPDALLREIVKLEEKGIPVRERLRISPSCPLILSYHVALDQAREKARGEFKIGTTGRGIGPAYEDKVARRGLRIGDLFHRERFAAKLGELLDYHNFVLVNYYKEPAIDFQKTLDECMEYADMLKPLMLDVTAALHEMRRDGKDIMFEGAQGSLLDIDHGTYPYVTSSNTTAGGIATGSGFGPMYLDYILGITKAYTTRVGSGPFPTELFDDVGAFLAKRGHEFGATTGRARRCGWFDAVILRRAIEINSISGLCLTKLDVLDGLETINICVGYENEEGAVIDAPTDADSYLGLRPVYEQMPGWSESTLGAKTLEELPAAARAYIKRVEELVGAPIDIISTGPDRNETIVLRHPFG.

Residues 13–19 and 41–43 contribute to the GTP site; these read GDEGKGK and GHT. The active-site Proton acceptor is the Asp-14. Positions 14 and 41 each coordinate Mg(2+). IMP-binding positions include 14 to 17, 39 to 42, Thr-130, Arg-144, Gln-225, Thr-240, and Arg-304; these read DEGK and NAGH. His-42 acts as the Proton donor in catalysis. 300–306 is a substrate binding site; the sequence is ATTGRAR. Residues Arg-306, 332-334, and 414-416 each bind GTP; these read KLD and STG.

It belongs to the adenylosuccinate synthetase family. In terms of assembly, homodimer. Requires Mg(2+) as cofactor.

It localises to the cytoplasm. It carries out the reaction IMP + L-aspartate + GTP = N(6)-(1,2-dicarboxyethyl)-AMP + GDP + phosphate + 2 H(+). It functions in the pathway purine metabolism; AMP biosynthesis via de novo pathway; AMP from IMP: step 1/2. Plays an important role in the de novo pathway of purine nucleotide biosynthesis. Catalyzes the first committed step in the biosynthesis of AMP from IMP. The polypeptide is Adenylosuccinate synthetase (Pseudomonas syringae pv. syringae (strain B728a)).